Reading from the N-terminus, the 213-residue chain is Pyrrolidone-carboxylate peptidase (213 aa).

Residues Glu78, Cys141, and His165 contribute to the active site.

Belongs to the peptidase C15 family. Homotetramer.

It localises to the cytoplasm. It catalyses the reaction Release of an N-terminal pyroglutamyl group from a polypeptide, the second amino acid generally not being Pro.. In terms of biological role, removes 5-oxoproline from various penultimate amino acid residues except L-proline. The sequence is that of Pyrrolidone-carboxylate peptidase from Staphylococcus saprophyticus subsp. saprophyticus (strain ATCC 15305 / DSM 20229 / NCIMB 8711 / NCTC 7292 / S-41).